We begin with the raw amino-acid sequence, 312 residues long: Beta-lactamase regulatory protein BlaB (312 aa).

This chain is Beta-lactamase regulatory protein BlaB (blaB), found in Streptomyces cacaoi.